The primary structure comprises 246 residues: 3-deoxy-manno-octulosonate cytidylyltransferase (246 aa).

The protein belongs to the KdsB family.

Its subcellular location is the cytoplasm. It catalyses the reaction 3-deoxy-alpha-D-manno-oct-2-ulosonate + CTP = CMP-3-deoxy-beta-D-manno-octulosonate + diphosphate. The protein operates within nucleotide-sugar biosynthesis; CMP-3-deoxy-D-manno-octulosonate biosynthesis; CMP-3-deoxy-D-manno-octulosonate from 3-deoxy-D-manno-octulosonate and CTP: step 1/1. Its pathway is bacterial outer membrane biogenesis; lipopolysaccharide biosynthesis. Activates KDO (a required 8-carbon sugar) for incorporation into bacterial lipopolysaccharide in Gram-negative bacteria. In Myxococcus xanthus (strain DK1622), this protein is 3-deoxy-manno-octulosonate cytidylyltransferase.